Here is a 425-residue protein sequence, read N- to C-terminus: F-box/LRR-repeat protein At3g59250 (425 aa).

In terms of domain architecture, F-box spans 6-54; the sequence is KDKISNLPEALICHILSFLPIEDSALTSVLSKRWRYLFAFRPNLVFDDS. LRR repeat units follow at residues 86-113, 138-163, 185-210, 264-293, and 294-319; these read DLQV…RIES, MLGK…VLNN, CTES…KYSD, CLSA…TIKT, and NQSV…VFEG.

This chain is F-box/LRR-repeat protein At3g59250, found in Arabidopsis thaliana (Mouse-ear cress).